Here is a 374-residue protein sequence, read N- to C-terminus: PqqA peptide cyclase (374 aa).

Residues 13-230 (VPAPIAMLAE…EAEARLRGTL (218 aa)) enclose the Radical SAM core domain. [4Fe-4S] cluster contacts are provided by C27, C31, and C34.

It belongs to the radical SAM superfamily. PqqE family. Interacts with PqqD. The interaction is necessary for activity of PqqE. Requires [4Fe-4S] cluster as cofactor.

The catalysed reaction is [PQQ precursor protein] + S-adenosyl-L-methionine = E-Y cross-linked-[PQQ precursor protein] + 5'-deoxyadenosine + L-methionine + H(+). The protein operates within cofactor biosynthesis; pyrroloquinoline quinone biosynthesis. Catalyzes the cross-linking of a glutamate residue and a tyrosine residue in the PqqA protein as part of the biosynthesis of pyrroloquinoline quinone (PQQ). The polypeptide is PqqA peptide cyclase (Ruegeria pomeroyi (strain ATCC 700808 / DSM 15171 / DSS-3) (Silicibacter pomeroyi)).